A 173-amino-acid polypeptide reads, in one-letter code: Disulfide bond formation protein B (173 aa).

Over Met-1–Ala-14 the chain is Cytoplasmic. The helical transmembrane segment at Trp-15–Phe-31 threads the bilayer. The Periplasmic segment spans residues Phe-32 to Leu-49. Cys-41 and Cys-44 form a disulfide bridge. The chain crosses the membrane as a helical span at residues Ala-50–Pro-65. At Glu-66–Trp-72 the chain is on the cytoplasmic side. A helical membrane pass occupies residues Ser-73–Leu-90. Topologically, residues Lys-91–Gln-145 are periplasmic. Cys-105 and Cys-131 form a disulfide bridge. Residues Trp-146–Gly-164 form a helical membrane-spanning segment. Residues Asn-165–Ser-173 are Cytoplasmic-facing.

The protein belongs to the DsbB family.

It localises to the cell inner membrane. Required for disulfide bond formation in some periplasmic proteins. Acts by oxidizing the DsbA protein. The protein is Disulfide bond formation protein B of Aeromonas salmonicida (strain A449).